We begin with the raw amino-acid sequence, 262 residues long: Small ribosomal subunit protein eS1 (262 aa).

It belongs to the eukaryotic ribosomal protein eS1 family. Component of the small ribosomal subunit. Mature ribosomes consist of a small (40S) and a large (60S) subunit. The 40S subunit contains about 33 different proteins and 1 molecule of RNA (18S). The 60S subunit contains about 49 different proteins and 3 molecules of RNA (25S, 5.8S and 5S).

Its subcellular location is the cytoplasm. The protein is Small ribosomal subunit protein eS1 of Plasmodium vivax (strain Salvador I).